Consider the following 31-residue polypeptide: MEALVYTFLLVGTLGIIFFAIFFREPPRIVK.

A helical membrane pass occupies residues 3–23 (ALVYTFLLVGTLGIIFFAIFF).

This sequence belongs to the PsbT family. PSII is composed of 1 copy each of membrane proteins PsbA, PsbB, PsbC, PsbD, PsbE, PsbF, PsbH, PsbI, PsbJ, PsbK, PsbL, PsbM, PsbT, PsbY, PsbZ, Psb30/Ycf12, at least 3 peripheral proteins of the oxygen-evolving complex and a large number of cofactors. It forms dimeric complexes.

The protein localises to the plastid. The protein resides in the chloroplast thylakoid membrane. Found at the monomer-monomer interface of the photosystem II (PS II) dimer, plays a role in assembly and dimerization of PSII. PSII is a light-driven water plastoquinone oxidoreductase, using light energy to abstract electrons from H(2)O, generating a proton gradient subsequently used for ATP formation. The sequence is that of Photosystem II reaction center protein T from Chlorella vulgaris (Green alga).